The primary structure comprises 385 residues: Nod factor hydrolase protein 1 (385 aa).

The first 21 residues, 1–21 (MANFLKLKQFLTLVLILLALA), serve as a signal peptide directing secretion. Residues 36–385 (RVKGIYWIEN…TASKAWRPES (350 aa)) form the GH18 domain. 2 N-linked (GlcNAc...) asparagine glycosylation sites follow: asparagine 115 and asparagine 134. The Proton donor role is filled by glutamate 153. N-linked (GlcNAc...) asparagine glycans are attached at residues asparagine 233 and asparagine 247.

This sequence belongs to the glycosyl hydrolase 18 family. Chitinase class V subfamily.

Symbiotic enzyme that hydrolytically inactivates Nod factors (NFs) with a C16:2 acyl chain produced by the microsymbiont Sinorhizobium meliloti. NFs are lipo-chitooligosaccharide signaling molecules produced by nitrogen-fixing rhizobia to initiate nodulation (symbiosis) on the roots of legumes. Controls NF hydrolysis at the stage of root hair infection. Involved in the regulation of growth and branching of mature nodules. Modulates NF levels and signaling to complete transition of infected nodules to functional nitrogen-fixing organs. Lacks chitinase activity in vitro toward glycol chitin, carboxymethyl-chitin, colloidal chitin, and the chitin oligosaccharides (N-acetylglucosamine) (GlcNAc)6 and (GlcNAc)5. In Medicago truncatula (Barrel medic), this protein is Nod factor hydrolase protein 1.